A 625-amino-acid polypeptide reads, in one-letter code: Mesothelin (625 aa).

The N-terminal stretch at 1–35 is a signal peptide; sequence MALPTAQPLLGSCGSPICSRSFLLLLLSLGWLPLL. Position 202 is a phosphoserine (Ser-202). An intrachain disulfide couples Cys-304 to Cys-328. N-linked (GlcNAc...) asparagine glycans are attached at residues Asn-390, Asn-488, and Asn-517. Residue Ser-600 is the site of GPI-anchor amidated serine attachment. A propeptide spans 601–625 (removed in mature form); sequence SGAPLLGPGFVFAWIPALLSALRLS.

This sequence belongs to the mesothelin family. Interacts with MUC16. Post-translationally, proteolytically cleaved by a furin-like convertase to generate megakaryocyte-potentiating factor (MPF), and the cleaved form of mesothelin. In terms of tissue distribution, specifically expressed in lung. Overexpressed in hereditary renal carcinoma developed by Eker rats.

The protein resides in the cell membrane. Its subcellular location is the golgi apparatus. It is found in the secreted. Membrane-anchored forms may play a role in cellular adhesion. Its function is as follows. Megakaryocyte-potentiating factor (MPF) may potentiate megakaryocyte colony formation. In Rattus norvegicus (Rat), this protein is Mesothelin (Msln).